We begin with the raw amino-acid sequence, 1234 residues long: 1-phosphatidylinositol 4,5-bisphosphate phosphodiesterase beta-3 (1234 aa).

N-acetylalanine is present on Ala2. Residues 315 to 466 form the PI-PLC X-box domain; the sequence is MDMTQPLSAY…LMGRILVKNK (152 aa). Active-site residues include His330 and His377. The tract at residues 465-586 is disordered; sequence NKKRHRPSTG…GTASSEVNAT (122 aa). Ser472, Ser488, Ser493, and Ser535 each carry phosphoserine. Over residues 486-513 the composition is skewed to low complexity; sequence EQSNSALSESSAATEPSSPQLGSPSSDS. The segment covering 554–566 has biased composition (acidic residues); it reads REDEEEDEEEEET. Residues 577-586 are compositionally biased toward polar residues; sequence GTASSEVNAT. Positions 589-705 constitute a PI-PLC Y-box domain; sequence MSTLVNYVEP…GYLLKPEFMR (117 aa). A C2 domain is found at 706 to 834; sequence RPDKSFDPFT…RNEANQPLCL (129 aa). Residues 886 to 907 show a composition bias toward polar residues; it reads ASTEMCQETPSQQQGSQLSSNP. Positions 886–936 are disordered; it reads ASTEMCQETPSQQQGSQLSSNPVPNPLDDSPRWPPGPTTSPTSTSLSSPGQ. Residues 924-934 are compositionally biased toward low complexity; it reads TSPTSTSLSSP. Phosphoserine occurs at positions 925 and 1105. Residues 1196 to 1234 are disordered; the sequence is SEGLGDGPLVACASNGHAAGSGGHQSGADSESQEENTQL. Residues 1231 to 1234 form an interaction with SHANK2 region; that stretch reads NTQL.

As to quaternary structure, interacts with LPAR2. Interacts with SHANK2. Ca(2+) is required as a cofactor. As to expression, expressed in parotid gland, brain, liver, uterus, lung, heart, adrenal gland, and ovary. Not detected in spleen, pancreas, intestine, thymus or kidney.

The protein resides in the cytoplasm. Its subcellular location is the membrane. It localises to the nucleus. The enzyme catalyses a 1,2-diacyl-sn-glycero-3-phospho-(1D-myo-inositol-4,5-bisphosphate) + H2O = 1D-myo-inositol 1,4,5-trisphosphate + a 1,2-diacyl-sn-glycerol + H(+). It carries out the reaction a 1,2-diacyl-sn-glycero-3-phospho-(1D-myo-inositol) + H2O = 1D-myo-inositol 1-phosphate + a 1,2-diacyl-sn-glycerol + H(+). Activated by G(q)/G(11) G alpha proteins in response to ligand-binding to G protein-coupled receptors. Functionally, catalyzes the production of the second messenger molecules diacylglycerol (DAG) and inositol 1,4,5-trisphosphate (IP3). Key transducer of G protein-coupled receptor signaling: activated by G(q)/G(11) G alpha proteins downstream of G protein-coupled receptors activation. In neutrophils, participates in a phospholipase C-activating N-formyl peptide-activated GPCR (G protein-coupled receptor) signaling pathway by promoting RASGRP4 activation by DAG, to promote neutrophil functional responses. This is 1-phosphatidylinositol 4,5-bisphosphate phosphodiesterase beta-3 from Rattus norvegicus (Rat).